The primary structure comprises 358 residues: Fructose-bisphosphate aldolase 3, cytoplasmic (358 aa).

Arg39 provides a ligand contact to substrate. The active-site Proton acceptor is Glu183. Lys225 acts as the Schiff-base intermediate with dihydroxyacetone-P in catalysis. Substrate is bound by residues Ser266 to Gly268 and Arg298.

This sequence belongs to the class I fructose-bisphosphate aldolase family. In terms of assembly, homotetramer.

Its subcellular location is the cytoplasm. It is found in the cytosol. It carries out the reaction beta-D-fructose 1,6-bisphosphate = D-glyceraldehyde 3-phosphate + dihydroxyacetone phosphate. Its pathway is carbohydrate degradation; glycolysis; D-glyceraldehyde 3-phosphate and glycerone phosphate from D-glucose: step 4/4. Its function is as follows. Fructose-bisphosphate aldolase that plays a key role in glycolysis and gluconeogenesis. The chain is Fructose-bisphosphate aldolase 3, cytoplasmic from Oryza sativa subsp. japonica (Rice).